Consider the following 199-residue polypeptide: Urease accessory protein UreG (199 aa).

Residue 8-15 (GPVGSGKT) participates in GTP binding.

It belongs to the SIMIBI class G3E GTPase family. UreG subfamily. As to quaternary structure, homodimer. UreH, UreF and UreG form a complex that acts as a GTP-hydrolysis-dependent molecular chaperone, activating the urease apoprotein by helping to assemble the nickel containing metallocenter of UreC. The UreE protein probably delivers the nickel.

It localises to the cytoplasm. Facilitates the functional incorporation of the urease nickel metallocenter. This process requires GTP hydrolysis, probably effectuated by UreG. This Helicobacter pylori (strain J99 / ATCC 700824) (Campylobacter pylori J99) protein is Urease accessory protein UreG.